The sequence spans 181 residues: uncharacterized protein (181 aa).

It to M.jannaschii MJ1106.

This is an uncharacterized protein from Methanothermobacter thermautotrophicus (strain ATCC 29096 / DSM 1053 / JCM 10044 / NBRC 100330 / Delta H) (Methanobacterium thermoautotrophicum).